We begin with the raw amino-acid sequence, 821 residues long: Phenylalanine--tRNA ligase beta subunit (821 aa).

Residues serine 39–glycine 149 form the tRNA-binding domain. In terms of domain architecture, B5 spans leucine 414–leucine 507. 4 residues coordinate Mg(2+): aspartate 485, aspartate 491, glutamate 494, and glutamate 495. Residues proline 727–arginine 820 form the FDX-ACB domain.

Belongs to the phenylalanyl-tRNA synthetase beta subunit family. Type 1 subfamily. In terms of assembly, tetramer of two alpha and two beta subunits. Mg(2+) serves as cofactor.

Its subcellular location is the cytoplasm. It catalyses the reaction tRNA(Phe) + L-phenylalanine + ATP = L-phenylalanyl-tRNA(Phe) + AMP + diphosphate + H(+). This chain is Phenylalanine--tRNA ligase beta subunit, found in Prochlorococcus marinus subsp. pastoris (strain CCMP1986 / NIES-2087 / MED4).